The chain runs to 974 residues: Mediator of RNA polymerase II transcription subunit 16 (974 aa).

The disordered stretch occupies residues Glu-62–Gly-92. A compositionally biased stretch (low complexity) spans Ser-63–Ser-75. A compositionally biased stretch (polar residues) spans Val-76–Gly-92. Residues Lys-889–Lys-893 carry the Nuclear localization signal motif.

Belongs to the Mediator complex subunit 16 family. In terms of assembly, component of the Mediator complex, which is composed of at least 21 subunits that form three structurally distinct submodules. The Mediator head module contains MED6, MED8, MED11, SRB4/MED17, SRB5/MED18, ROX3/MED19, SRB2/MED20 and SRB6/MED22, the middle module contains MED1, MED4, NUT1/MED5, MED7, CSE2/MED9, NUT2/MED10, SRB7/MED21 and SOH1/MED31, and the tail module contains MED2, PGD1/MED3, RGR1/MED14, GAL11/MED15 and SIN4/MED16. The head and the middle modules interact directly with RNA polymerase II, whereas the elongated tail module interacts with gene-specific regulatory proteins. Interacts with HOG1. Phosphorylated by KIN28.

Its subcellular location is the nucleus. Its function is as follows. Component of the Mediator complex, a coactivator involved in the regulated transcription of nearly all RNA polymerase II-dependent genes. Mediator functions as a bridge to convey information from gene-specific regulatory proteins to the basal RNA polymerase II transcription machinery. The Mediator complex, having a compact conformation in its free form, is recruited to promoters by direct interactions with regulatory proteins and serves for the assembly of a functional preinitiation complex with RNA polymerase II and the general transcription factors. The Mediator complex unfolds to an extended conformation and partially surrounds RNA polymerase II, specifically interacting with the unphosphorylated form of the C-terminal domain (CTD) of RNA polymerase II. The Mediator complex dissociates from the RNA polymerase II holoenzyme and stays at the promoter when transcriptional elongation begins. The protein is Mediator of RNA polymerase II transcription subunit 16 (SIN4) of Saccharomyces cerevisiae (strain ATCC 204508 / S288c) (Baker's yeast).